Consider the following 155-residue polypeptide: Ribosomal RNA large subunit methyltransferase H (155 aa).

S-adenosyl-L-methionine-binding positions include leucine 73, glycine 104, and 123 to 128 (LSPLTL).

The protein belongs to the RNA methyltransferase RlmH family. In terms of assembly, homodimer.

The protein localises to the cytoplasm. The enzyme catalyses pseudouridine(1915) in 23S rRNA + S-adenosyl-L-methionine = N(3)-methylpseudouridine(1915) in 23S rRNA + S-adenosyl-L-homocysteine + H(+). In terms of biological role, specifically methylates the pseudouridine at position 1915 (m3Psi1915) in 23S rRNA. This is Ribosomal RNA large subunit methyltransferase H from Pseudomonas aeruginosa (strain LESB58).